Here is a 210-residue protein sequence, read N- to C-terminus: Orotate phosphoribosyltransferase (210 aa).

5-phospho-alpha-D-ribose 1-diphosphate-binding positions include Arg-94, Lys-98, His-100, and 120-128 (EDLISTGGS). An orotate-binding site is contributed by Ser-124.

It belongs to the purine/pyrimidine phosphoribosyltransferase family. PyrE subfamily. Homodimer. The cofactor is Mg(2+).

It carries out the reaction orotidine 5'-phosphate + diphosphate = orotate + 5-phospho-alpha-D-ribose 1-diphosphate. The protein operates within pyrimidine metabolism; UMP biosynthesis via de novo pathway; UMP from orotate: step 1/2. Its function is as follows. Catalyzes the transfer of a ribosyl phosphate group from 5-phosphoribose 1-diphosphate to orotate, leading to the formation of orotidine monophosphate (OMP). The sequence is that of Orotate phosphoribosyltransferase from Bacillus cereus (strain G9842).